The sequence spans 550 residues: Probable asparagine synthetase [glutamine-hydrolyzing] (550 aa).

Cys2 acts as the For GATase activity in catalysis. A Glutamine amidotransferase type-2 domain is found at 2–189; that stretch reads CGIICFIQYG…PNQYVTIDLS (188 aa). L-glutamine-binding positions include 53–57, 78–80, and Asp100; these read RLAIM and NGE. Residues 213–530 enclose the Asparagine synthetase domain; that stretch reads YYQSHKSLID…GGRDHIIPHY (318 aa). Residues Leu256, Val284, and 360 to 361 each bind ATP; that span reads SG.

The enzyme catalyses L-aspartate + L-glutamine + ATP + H2O = L-asparagine + L-glutamate + AMP + diphosphate + H(+). The protein operates within amino-acid biosynthesis; L-asparagine biosynthesis; L-asparagine from L-aspartate (L-Gln route): step 1/1. The polypeptide is Probable asparagine synthetase [glutamine-hydrolyzing] (Acanthamoeba polyphaga mimivirus (APMV)).